Consider the following 370-residue polypeptide: 3-dehydroquinate synthase (370 aa).

Residues 112–116 (GVIGD), 136–137 (TT), lysine 149, lysine 158, and 176–179 (TLKT) each bind NAD(+). Zn(2+)-binding residues include glutamate 191, histidine 256, and histidine 273.

This sequence belongs to the sugar phosphate cyclases superfamily. Dehydroquinate synthase family. Co(2+) is required as a cofactor. The cofactor is Zn(2+). It depends on NAD(+) as a cofactor.

The protein resides in the cytoplasm. It catalyses the reaction 7-phospho-2-dehydro-3-deoxy-D-arabino-heptonate = 3-dehydroquinate + phosphate. It functions in the pathway metabolic intermediate biosynthesis; chorismate biosynthesis; chorismate from D-erythrose 4-phosphate and phosphoenolpyruvate: step 2/7. In terms of biological role, catalyzes the conversion of 3-deoxy-D-arabino-heptulosonate 7-phosphate (DAHP) to dehydroquinate (DHQ). The sequence is that of 3-dehydroquinate synthase from Prochlorococcus marinus (strain MIT 9211).